A 509-amino-acid chain; its full sequence is UDP-N-acetylmuramoylalanine--D-glutamate ligase (509 aa).

An ATP-binding site is contributed by 116–122 (GTNGKST).

Belongs to the MurCDEF family.

It localises to the cytoplasm. It catalyses the reaction UDP-N-acetyl-alpha-D-muramoyl-L-alanine + D-glutamate + ATP = UDP-N-acetyl-alpha-D-muramoyl-L-alanyl-D-glutamate + ADP + phosphate + H(+). It functions in the pathway cell wall biogenesis; peptidoglycan biosynthesis. Cell wall formation. Catalyzes the addition of glutamate to the nucleotide precursor UDP-N-acetylmuramoyl-L-alanine (UMA). This is UDP-N-acetylmuramoylalanine--D-glutamate ligase from Wolbachia pipientis wMel.